We begin with the raw amino-acid sequence, 359 residues long: 3-isopropylmalate dehydrogenase (359 aa).

An NAD(+)-binding site is contributed by 76-89; the sequence is GPKWDDPSAKTRPE. 4 residues coordinate substrate: R96, R106, R134, and D223. D223, D247, and D251 together coordinate Mg(2+). 281–293 provides a ligand contact to NAD(+); the sequence is GSAPDIAGKSVAN.

The protein belongs to the isocitrate and isopropylmalate dehydrogenases family. LeuB type 1 subfamily. In terms of assembly, homodimer. Requires Mg(2+) as cofactor. The cofactor is Mn(2+).

It localises to the cytoplasm. The catalysed reaction is (2R,3S)-3-isopropylmalate + NAD(+) = 4-methyl-2-oxopentanoate + CO2 + NADH. It functions in the pathway amino-acid biosynthesis; L-leucine biosynthesis; L-leucine from 3-methyl-2-oxobutanoate: step 3/4. Its function is as follows. Catalyzes the oxidation of 3-carboxy-2-hydroxy-4-methylpentanoate (3-isopropylmalate) to 3-carboxy-4-methyl-2-oxopentanoate. The product decarboxylates to 4-methyl-2 oxopentanoate. This Rhodopirellula baltica (strain DSM 10527 / NCIMB 13988 / SH1) protein is 3-isopropylmalate dehydrogenase.